A 328-amino-acid chain; its full sequence is tRNA dimethylallyltransferase (328 aa).

25 to 32 (GNTGSGKS) lines the ATP pocket. 27 to 32 (TGSGKS) is a binding site for substrate. Positions 50-53 (DSRQ) are interaction with substrate tRNA.

It belongs to the IPP transferase family. Monomer. It depends on Mg(2+) as a cofactor.

The catalysed reaction is adenosine(37) in tRNA + dimethylallyl diphosphate = N(6)-dimethylallyladenosine(37) in tRNA + diphosphate. Its function is as follows. Catalyzes the transfer of a dimethylallyl group onto the adenine at position 37 in tRNAs that read codons beginning with uridine, leading to the formation of N6-(dimethylallyl)adenosine (i(6)A). The polypeptide is tRNA dimethylallyltransferase (Dehalococcoides mccartyi (strain ATCC BAA-2100 / JCM 16839 / KCTC 5957 / BAV1)).